Consider the following 450-residue polypeptide: Divalent metal cation transporter MntH (450 aa).

11 helical membrane passes run 34-54 (LSFL…GNWI), 61-81 (AQYG…AMLL), 108-128 (IAII…IAEV), 141-161 (IPLI…LFIM), 170-190 (AIVG…VYIS), 212-232 (GILY…NLYL), 263-283 (IQLS…ASLF), 305-325 (PVLG…ALLA), 361-381 (SLAV…AAKI), 383-403 (QLLV…LIPL), and 422-442 (VNII…YLIV).

Belongs to the NRAMP family.

Its subcellular location is the cell membrane. H(+)-stimulated, divalent metal cation uptake system. The polypeptide is Divalent metal cation transporter MntH (Staphylococcus aureus (strain JH1)).